The following is a 195-amino-acid chain: ATP-dependent Clp protease proteolytic subunit (195 aa).

Catalysis depends on Ser98, which acts as the Nucleophile. The active site involves His123.

Belongs to the peptidase S14 family. Fourteen ClpP subunits assemble into 2 heptameric rings which stack back to back to give a disk-like structure with a central cavity, resembling the structure of eukaryotic proteasomes.

Its subcellular location is the cytoplasm. It catalyses the reaction Hydrolysis of proteins to small peptides in the presence of ATP and magnesium. alpha-casein is the usual test substrate. In the absence of ATP, only oligopeptides shorter than five residues are hydrolyzed (such as succinyl-Leu-Tyr-|-NHMec, and Leu-Tyr-Leu-|-Tyr-Trp, in which cleavage of the -Tyr-|-Leu- and -Tyr-|-Trp bonds also occurs).. Its function is as follows. Cleaves peptides in various proteins in a process that requires ATP hydrolysis. Has a chymotrypsin-like activity. Plays a major role in the degradation of misfolded proteins. In Staphylococcus haemolyticus (strain JCSC1435), this protein is ATP-dependent Clp protease proteolytic subunit.